The chain runs to 310 residues: Methionyl-tRNA formyltransferase (310 aa).

111-114 (SLLP) serves as a coordination point for (6S)-5,6,7,8-tetrahydrofolate.

Belongs to the Fmt family.

The catalysed reaction is L-methionyl-tRNA(fMet) + (6R)-10-formyltetrahydrofolate = N-formyl-L-methionyl-tRNA(fMet) + (6S)-5,6,7,8-tetrahydrofolate + H(+). Its function is as follows. Attaches a formyl group to the free amino group of methionyl-tRNA(fMet). The formyl group appears to play a dual role in the initiator identity of N-formylmethionyl-tRNA by promoting its recognition by IF2 and preventing the misappropriation of this tRNA by the elongation apparatus. The chain is Methionyl-tRNA formyltransferase from Rhodopseudomonas palustris (strain BisB5).